A 410-amino-acid chain; its full sequence is Multifunctional CCA protein (410 aa).

G8 and R11 together coordinate ATP. 2 residues coordinate CTP: G8 and R11. Positions 21 and 23 each coordinate Mg(2+). Residues R91, R138, and R141 each coordinate ATP. Positions 91, 138, and 141 each coordinate CTP. One can recognise an HD domain in the interval T229–D347.

It belongs to the tRNA nucleotidyltransferase/poly(A) polymerase family. Bacterial CCA-adding enzyme type 1 subfamily. Monomer. Can also form homodimers and oligomers. It depends on Mg(2+) as a cofactor. Ni(2+) serves as cofactor.

It carries out the reaction a tRNA precursor + 2 CTP + ATP = a tRNA with a 3' CCA end + 3 diphosphate. The enzyme catalyses a tRNA with a 3' CCA end + 2 CTP + ATP = a tRNA with a 3' CCACCA end + 3 diphosphate. In terms of biological role, catalyzes the addition and repair of the essential 3'-terminal CCA sequence in tRNAs without using a nucleic acid template. Adds these three nucleotides in the order of C, C, and A to the tRNA nucleotide-73, using CTP and ATP as substrates and producing inorganic pyrophosphate. tRNA 3'-terminal CCA addition is required both for tRNA processing and repair. Also involved in tRNA surveillance by mediating tandem CCA addition to generate a CCACCA at the 3' terminus of unstable tRNAs. While stable tRNAs receive only 3'-terminal CCA, unstable tRNAs are marked with CCACCA and rapidly degraded. The polypeptide is Multifunctional CCA protein (Xanthomonas campestris pv. campestris (strain B100)).